Consider the following 110-residue polypeptide: MKTALVLFFMLIPVWASSCQLHKPWNFLDCYTKETNYIGWVYGIMSGLVFVSSVVSLQLYARLNFSWNKYTDDLPEYPNPQDDLPLNIVFPEPPRPPSVVSYFKFTGEDD.

A signal peptide spans 1–16 (MKTALVLFFMLIPVWA). Residues 37-57 (YIGWVYGIMSGLVFVSSVVSL) traverse the membrane as a helical segment.

It belongs to the adenoviridae E3_14 family. In terms of processing, phosphorylated on serine; O-glycosylated, but not N-glycosylated.

The protein localises to the host membrane. In terms of biological role, down-regulates the EGF receptor and prevents cytolysis by TNF. The polypeptide is Early E3B 12.7 kDa protein (Homo sapiens (Human)).